The primary structure comprises 349 residues: Septin-2 (349 aa).

The Septin-type G domain maps to 33–305 (KGFEFTLMVV…ENFRSERLKR (273 aa)). Residues 43–50 (GESGLGKS) are G1 motif. Residues 43 to 50 (GESGLGKS), Thr-77, Gly-103, 182 to 190 (KADTLTLKE), Gly-240, and Arg-255 contribute to the GTP site. A G3 motif region spans residues 100-103 (DTPG). Residues 181–184 (AKAD) form a G4 motif region. The interval 259–269 (WGVVEVENPEH) is important for dimerization.

Belongs to the TRAFAC class TrmE-Era-EngA-EngB-Septin-like GTPase superfamily. Septin GTPase family. As to quaternary structure, septins polymerize into heterooligomeric protein complexes that form filaments, and associate with cellular membranes, actin filaments and microtubules. GTPase activity is required for filament formation. Can form heterooligomers with other family members and form filaments.

The protein localises to the cytoplasm. Its subcellular location is the cytoskeleton. It localises to the spindle. The protein resides in the cleavage furrow. It is found in the midbody. The protein localises to the cell cortex. Its subcellular location is the cell projection. It localises to the cilium membrane. Functionally, filament-forming cytoskeletal GTPase. Required for normal organization of the actin cytoskeleton. Plays a role in the biogenesis of polarized columnar-shaped epithelium by maintaining polyglutamylated microtubules, thus facilitating efficient vesicle transport, and by impeding MAP4 binding to tubulin. Required for the progression through mitosis. Forms a scaffold at the midplane of the mitotic splindle required to maintain CENPE localization at kinetochores and consequently chromosome congression. During anaphase, may be required for chromosome segregation and spindle elongation. Plays a role in ciliogenesis and collective cell movements. In cilia, required for the integrity of the diffusion barrier at the base of the primary cilium that prevents diffusion of transmembrane proteins between the cilia and plasma membranes. This chain is Septin-2, found in Gallus gallus (Chicken).